Here is a 928-residue protein sequence, read N- to C-terminus: DNA polymerase I (928 aa).

One can recognise a 5'-3' exonuclease domain in the interval 1–323; sequence MVQIPENPLI…IDESPSEPAA (323 aa). Positions 324–517 constitute a 3'-5' exonuclease domain; that stretch reads ALSYENYVTI…LHLKMWPELQ (194 aa). The interval 324-928 is klenow fragment; it reads ALSYENYVTI…GSGENWDQAH (605 aa). The segment at 521–928 is polymerase; that stretch reads GPLNVFENIE…GSGENWDQAH (408 aa).

Belongs to the DNA polymerase type-A family. As to quaternary structure, single-chain monomer with multiple functions.

The enzyme catalyses DNA(n) + a 2'-deoxyribonucleoside 5'-triphosphate = DNA(n+1) + diphosphate. In addition to polymerase activity, this DNA polymerase exhibits 3'-5' and 5'-3' exonuclease activity. It is able to utilize nicked circular duplex DNA as a template and can unwind the parental DNA strand from its template. The protein is DNA polymerase I (polA) of Salmonella typhimurium (strain LT2 / SGSC1412 / ATCC 700720).